A 600-amino-acid polypeptide reads, in one-letter code: Elongation factor 4 (600 aa).

Residues 5–187 (SHIRNFSIVA…ALVNRLPCPE (183 aa)) form the tr-type G domain. GTP contacts are provided by residues 17-22 (DHGKST) and 134-137 (NKID).

It belongs to the TRAFAC class translation factor GTPase superfamily. Classic translation factor GTPase family. LepA subfamily.

It is found in the cell inner membrane. The catalysed reaction is GTP + H2O = GDP + phosphate + H(+). Required for accurate and efficient protein synthesis under certain stress conditions. May act as a fidelity factor of the translation reaction, by catalyzing a one-codon backward translocation of tRNAs on improperly translocated ribosomes. Back-translocation proceeds from a post-translocation (POST) complex to a pre-translocation (PRE) complex, thus giving elongation factor G a second chance to translocate the tRNAs correctly. Binds to ribosomes in a GTP-dependent manner. This Paramagnetospirillum magneticum (strain ATCC 700264 / AMB-1) (Magnetospirillum magneticum) protein is Elongation factor 4.